Consider the following 235-residue polypeptide: Sperm-associated microtubule inner protein 5 (235 aa).

Microtubule inner protein component of sperm flagellar doublet microtubules. As to expression, expressed in sperm.

The protein resides in the cytoplasm. The protein localises to the cytoskeleton. It localises to the flagellum axoneme. Its subcellular location is the nucleus. Microtubule inner protein (MIP) part of the dynein-decorated doublet microtubules (DMTs) in flagellum axoneme. May serve to reinforce and thus stabilize the microtubule structure in the sperm flagella. The polypeptide is Sperm-associated microtubule inner protein 5 (SPMIP5) (Bos taurus (Bovine)).